The primary structure comprises 378 residues: Queuine tRNA-ribosyltransferase (378 aa).

Catalysis depends on D93, which acts as the Proton acceptor. Substrate contacts are provided by residues 93–97 (DSGGF), D147, Q189, and G216. The RNA binding stretch occupies residues 247–253 (GVGTFRE). Catalysis depends on D266, which acts as the Nucleophile. The segment at 271 to 275 (TRVAR) is RNA binding; important for wobble base 34 recognition. Residues C308, C310, C313, and H339 each coordinate Zn(2+).

It belongs to the queuine tRNA-ribosyltransferase family. As to quaternary structure, homodimer. Within each dimer, one monomer is responsible for RNA recognition and catalysis, while the other monomer binds to the replacement base PreQ1. The cofactor is Zn(2+).

The catalysed reaction is 7-aminomethyl-7-carbaguanine + guanosine(34) in tRNA = 7-aminomethyl-7-carbaguanosine(34) in tRNA + guanine. The protein operates within tRNA modification; tRNA-queuosine biosynthesis. Its function is as follows. Catalyzes the base-exchange of a guanine (G) residue with the queuine precursor 7-aminomethyl-7-deazaguanine (PreQ1) at position 34 (anticodon wobble position) in tRNAs with GU(N) anticodons (tRNA-Asp, -Asn, -His and -Tyr). Catalysis occurs through a double-displacement mechanism. The nucleophile active site attacks the C1' of nucleotide 34 to detach the guanine base from the RNA, forming a covalent enzyme-RNA intermediate. The proton acceptor active site deprotonates the incoming PreQ1, allowing a nucleophilic attack on the C1' of the ribose to form the product. After dissociation, two additional enzymatic reactions on the tRNA convert PreQ1 to queuine (Q), resulting in the hypermodified nucleoside queuosine (7-(((4,5-cis-dihydroxy-2-cyclopenten-1-yl)amino)methyl)-7-deazaguanosine). The sequence is that of Queuine tRNA-ribosyltransferase from Gloeobacter violaceus (strain ATCC 29082 / PCC 7421).